Here is a 352-residue protein sequence, read N- to C-terminus: Protein NDRG4 (352 aa).

Phosphoserine is present on residues K293, S298, S317, and S323. A disordered region spans residues 301 to 352 (AVPSASMTRLARSRTASLTSASSVDGSRPQPCAHSDSSEGMGQVNHTMEVSC). The span at 308-323 (TRLARSRTASLTSASS) shows a compositional bias: low complexity. Over residues 338 to 352 (SEGMGQVNHTMEVSC) the composition is skewed to polar residues.

It belongs to the NDRG family. As to expression, predominantly expressed in the brain (at protein level). Detected in neurons of various parts of brain, including the olfactory bulb, olfactory tuberculum, cerebral cortex, striatum, hippocampus, dentate gyrus, thalamus, hypothalamus, mesencephalon, cerebellum, pons and medulla oblongata.

It is found in the cytoplasm. It localises to the cytosol. Functionally, contributes to the maintenance of intracerebral BDNF levels within the normal range, which is necessary for the preservation of spatial learning and the resistance to neuronal cell death caused by ischemic stress. May enhance growth factor-induced ERK1 and ERK2 phosphorylation. May attenuate NGF-promoted ELK1 phosphorylation in a microtubule-dependent manner. This Mus musculus (Mouse) protein is Protein NDRG4 (Ndrg4).